The primary structure comprises 417 residues: Serine hydroxymethyltransferase (417 aa).

(6S)-5,6,7,8-tetrahydrofolate-binding positions include Leu121 and 125-127; that span reads GHL. Lys229 is subject to N6-(pyridoxal phosphate)lysine. Position 355-357 (355-357) interacts with (6S)-5,6,7,8-tetrahydrofolate; the sequence is SPF.

This sequence belongs to the SHMT family. Homodimer. Pyridoxal 5'-phosphate is required as a cofactor.

It is found in the cytoplasm. The catalysed reaction is (6R)-5,10-methylene-5,6,7,8-tetrahydrofolate + glycine + H2O = (6S)-5,6,7,8-tetrahydrofolate + L-serine. It functions in the pathway one-carbon metabolism; tetrahydrofolate interconversion. Its pathway is amino-acid biosynthesis; glycine biosynthesis; glycine from L-serine: step 1/1. Functionally, catalyzes the reversible interconversion of serine and glycine with tetrahydrofolate (THF) serving as the one-carbon carrier. This reaction serves as the major source of one-carbon groups required for the biosynthesis of purines, thymidylate, methionine, and other important biomolecules. Also exhibits THF-independent aldolase activity toward beta-hydroxyamino acids, producing glycine and aldehydes, via a retro-aldol mechanism. This is Serine hydroxymethyltransferase from Klebsiella pneumoniae subsp. pneumoniae (strain ATCC 700721 / MGH 78578).